Here is a 248-residue protein sequence, read N- to C-terminus: Probable phosphatase Sfri_3709 (248 aa).

Positions 8, 10, 16, 41, 74, 102, 132, 193, and 195 each coordinate Zn(2+).

Belongs to the PHP family. Requires Zn(2+) as cofactor.

The protein is Probable phosphatase Sfri_3709 of Shewanella frigidimarina (strain NCIMB 400).